Reading from the N-terminus, the 242-residue chain is Protein ABHD14A (242 aa).

A helical; Signal-anchor for type II membrane protein transmembrane segment spans residues 6–26; that stretch reads AALLGLGLLLMFLLYMGLPGP. N-linked (GlcNAc...) asparagine glycosylation is present at asparagine 38. Active-site charge relay system residues include serine 142, aspartate 193, and histidine 220.

The protein belongs to the AB hydrolase superfamily. ABHD14 family.

The protein localises to the cytoplasm. It is found in the membrane. In terms of biological role, possible role in granule neuron development. The protein is Protein ABHD14A of Rattus norvegicus (Rat).